We begin with the raw amino-acid sequence, 882 residues long: Putative HTH-type transcriptional regulator Mb0914c (882 aa).

Positions 814–879 constitute an HTH luxR-type domain; sequence PARGWGSLTP…QLVDEAARRG (66 aa). A DNA-binding region (H-T-H motif) is located at residues 838 to 857; sequence NKDIAKRLFVSPRTVQTHLT.

The protein is Putative HTH-type transcriptional regulator Mb0914c of Mycobacterium bovis (strain ATCC BAA-935 / AF2122/97).